A 138-amino-acid chain; its full sequence is Holo-[acyl-carrier-protein] synthase (138 aa).

Residues aspartate 8 and glutamate 56 each coordinate Mg(2+).

The protein belongs to the P-Pant transferase superfamily. AcpS family. It depends on Mg(2+) as a cofactor.

Its subcellular location is the cytoplasm. It catalyses the reaction apo-[ACP] + CoA = holo-[ACP] + adenosine 3',5'-bisphosphate + H(+). Functionally, transfers the 4'-phosphopantetheine moiety from coenzyme A to a Ser of acyl-carrier-protein. The polypeptide is Holo-[acyl-carrier-protein] synthase (Thermoanaerobacter pseudethanolicus (strain ATCC 33223 / 39E) (Clostridium thermohydrosulfuricum)).